Consider the following 542-residue polypeptide: MAKDIKFAENARRSLLKGVDKLADTVKTTIGPKGRNVVLEQSYGNPDITNDGVTIAKSIELKDHYENMGAKLVAEAAQKTNDIAGDGTTTATVLTQAIAREGMKNVTAGANPVGIRRGIEKATKAAVDELHKISHKVESKEQIANVAAVSSASKEVGELIADAMEKVGHDGVITIEDSRGINTELSVVEGMQFDRGYLSQYMVTDNDKMEADLDNPYILITDKKISNIQDILPLLQEIVQQGKSLLIIADDVTGEALPTLVLNKIRGTFNVVAVKAPGFGDRRKAQLEDIAALTGGTVITDDLGFELKDTKIDQLGQARRVTVTKDSTTIVDGAGSKDAIKEREDSIRKQIEESTSDFDKKKLQERLAKLTGGVAVIHVGAATETELKERRYRIEDALNSTRAAVDEGYVAGGGTALVDVEKAIKDLKGETSDEQTGINIVLRALSAPVRQIAENAGKDGAVVLNKLESQENEIGYNAATDKWENMVEAGIIDPTKVTRTALQNAASIAALLLTTEAVVADIPEDKPEAPQAGAAGAPGMGM.

Residues T29–P32, D86–T90, G413, N477–A479, and D493 each bind ATP.

It belongs to the chaperonin (HSP60) family. As to quaternary structure, forms a cylinder of 14 subunits composed of two heptameric rings stacked back-to-back. Interacts with the co-chaperonin GroES.

It is found in the cytoplasm. It carries out the reaction ATP + H2O + a folded polypeptide = ADP + phosphate + an unfolded polypeptide.. Together with its co-chaperonin GroES, plays an essential role in assisting protein folding. The GroEL-GroES system forms a nano-cage that allows encapsulation of the non-native substrate proteins and provides a physical environment optimized to promote and accelerate protein folding. The chain is Chaperonin GroEL from Lactobacillus acidophilus (strain ATCC 700396 / NCK56 / N2 / NCFM).